The chain runs to 574 residues: FAD-linked oxidoreductase penH (574 aa).

Residues 1 to 25 (MLPRALTLSALLALLLAIYLALAPA) form the signal peptide. N-linked (GlcNAc...) asparagine glycosylation is found at asparagine 48, asparagine 107, asparagine 193, asparagine 368, and asparagine 385. In terms of domain architecture, FAD-binding PCMH-type spans 121–305 (HQGRIPLYAA…VRVTMRTYPD (185 aa)).

Belongs to the oxygen-dependent FAD-linked oxidoreductase family. FAD serves as cofactor.

It carries out the reaction peniprequinolone + A = yaequinolone E + AH2. It participates in secondary metabolite biosynthesis. Its pathway is alkaloid biosynthesis. The protein operates within mycotoxin biosynthesis. Its function is as follows. FAD-linked oxidoreductase; part of the gene cluster that mediates the biosynthesis of penigequinolones, potent insecticidal alkaloids that contain a highly modified 10-carbon prenyl group. The first stage is catalyzed by the nonribosomal peptide synthetase penN that condenses anthranilic acid and O-methyl-L-tyrosine to produce 4'-methoxycyclopeptin. 4'-methoxycyclopeptin is then converted to 4'-methoxydehydrocyclopeptin by the ketoglutarate-dependent dioxygenase penM through dehydrogenation to form a double bond between C-alpha and C-beta of the O-methyltyrosine side chain. PenM also converts its first product methoxydehydrocyclopeptin to 4'-methoxycyclopenin. The following conversion of 4'methoxycyclopenin into 4'-methoxyviridicatin is catalyzed by the cyclopenase penL. 4'-methoxyviridicatin is the precursor of quinolone natural products, and is further converted to quinolinone B. The prenyltransferase penI then catalyzes the canonical Friedel-Crafts alkylation of quinolinone B with dimethylallyl cation to yield dimethylallyl quinolone, which is subjected to FAD-dependent dehydrogenation by the FAD-linked oxidoreductase penH to yield conjugated aryl diene. The delta(3') double bond then serves as the site of the second alkylation with DMAPP catalyzed by the prenyltransferase penG to yield a carbenium ion intermediate, which can be attacked by H(2)O to yield a styrenyl quinolone containing a C3'-hydroxyprenyl chain, or undergo cyclization to yield yaequinolones J1 and J2. The conversion of the styrenyl quinolone into the tetrahydrofuran-containing yaequinolone C is performed by the FAD-dependent monooxygenase penE and involves epoxidation of the terminal C7'-C8' olefin, followed by epoxide ring opening initiated by the C3' hydroxyl group. The predicted cysteine hydrolase penJ acts as an epoxide hydrolase that enhances the rate of the 5-exo-tet cyclization step, increasing the yield of yaequinolone C. PenF catalyzes the cationic rearrangement of the epoxide formed by penE (before ring opening to produce yaequinolone C) into yaequinolone D. Finally, the short-chain dehydrogenase/reductase (SDR)-like reductase penD, catalyzes both the dehydration of yaequinolone D and the reduction of the resulting oxonium to yield penigequinolone. This chain is FAD-linked oxidoreductase penH, found in Penicillium thymicola.